A 414-amino-acid chain; its full sequence is Serine/threonine transporter SstT (414 aa).

Transmembrane regions (helical) follow at residues 16–36 (GSLV…AWIS), 46–66 (LGTL…LMLV), 84–104 (ILFL…VFSF), 143–163 (ALLN…GFAL), 180–200 (AVTF…FGLV), 219–239 (LVVL…LLVF), 300–320 (MAGA…TLGV), and 332–352 (VVAS…LLLI).

This sequence belongs to the dicarboxylate/amino acid:cation symporter (DAACS) (TC 2.A.23) family.

It is found in the cell inner membrane. The catalysed reaction is L-serine(in) + Na(+)(in) = L-serine(out) + Na(+)(out). It catalyses the reaction L-threonine(in) + Na(+)(in) = L-threonine(out) + Na(+)(out). In terms of biological role, involved in the import of serine and threonine into the cell, with the concomitant import of sodium (symport system). The chain is Serine/threonine transporter SstT from Salmonella dublin (strain CT_02021853).